A 522-amino-acid chain; its full sequence is MVRSGKNGDLHLKQIAYYKRTGEYHPTTLPSERRGIRRAAKKFVFKEKKLFYVGKDRKQNRLVIVSEEEKKKVLRECHENDSGAHHGISRTLTLVESNYYWTSVTNDVKQWVYACQHCQVAKNTVIVAPKQHLLKVENPWSLVTVDLMGPFHTSNRSHVYAVIMTDLFTKWIVILPLCDVSASEVSKAIINIFFLYGPPQKIIMDQRDEFIQQINIELYRLFGIKQIVISHTSGSVNPTESTPNTIKAFLSKHCADHPNNWDDHLSAVSFAFNVTHLEPTKNTPYFQMFSRNPYMPETSDSLHEVDGDNTSMFAKILDAIKEADKIMENKTTSLGQMENNNLDELNKSKIIVKKKPKQLNPFHLKVGHEVLRQRKNWWKDGRFQSEWVGPCVIDYITESGCAVLRDNTGVRLKRPIKMSHLKPYIRESSEQESLYLLQGSVVADHDYIGLPEIPVGAYQANILVEDATIGIVDNELLTSSKDRELLEYRNTKVSPLIDDHSSLEKQTFSLLDSSNQVLEYLS.

The Integrase catalytic domain maps to 135–292; that stretch reads KVENPWSLVT…TPYFQMFSRN (158 aa). Ser502 is modified (phosphoserine).

The polypeptide is Gypsy retrotransposon integrase-like protein 1 (GIN1) (Pongo abelii (Sumatran orangutan)).